A 937-amino-acid polypeptide reads, in one-letter code: Alanine--tRNA ligase (937 aa).

Residues H626, H630, C727, and H731 each contribute to the Zn(2+) site.

The protein belongs to the class-II aminoacyl-tRNA synthetase family. The cofactor is Zn(2+).

The protein resides in the cytoplasm. It carries out the reaction tRNA(Ala) + L-alanine + ATP = L-alanyl-tRNA(Ala) + AMP + diphosphate. Its function is as follows. Catalyzes the attachment of alanine to tRNA(Ala) in a two-step reaction: alanine is first activated by ATP to form Ala-AMP and then transferred to the acceptor end of tRNA(Ala). Also edits incorrectly charged Ser-tRNA(Ala) and Gly-tRNA(Ala) via its editing domain. The protein is Alanine--tRNA ligase of Opitutus terrae (strain DSM 11246 / JCM 15787 / PB90-1).